Here is a 195-residue protein sequence, read N- to C-terminus: Holliday junction branch migration complex subunit RuvA (195 aa).

The tract at residues 1-64 (MIASIRGIIQ…EDALTLYGFS (64 aa)) is domain I. The segment at 65 to 142 (DPAQRNLFEQ…DLRQLSGTTP (78 aa)) is domain II. The interval 143 to 151 (GNVSTLDRE) is flexible linker. The interval 151–195 (ELTDILISLGYSATEAAAAIAALPGDAPPTLEERLRLALRYFGSA) is domain III.

The protein belongs to the RuvA family. In terms of assembly, homotetramer. Forms an RuvA(8)-RuvB(12)-Holliday junction (HJ) complex. HJ DNA is sandwiched between 2 RuvA tetramers; dsDNA enters through RuvA and exits via RuvB. An RuvB hexamer assembles on each DNA strand where it exits the tetramer. Each RuvB hexamer is contacted by two RuvA subunits (via domain III) on 2 adjacent RuvB subunits; this complex drives branch migration. In the full resolvosome a probable DNA-RuvA(4)-RuvB(12)-RuvC(2) complex forms which resolves the HJ.

It is found in the cytoplasm. The RuvA-RuvB-RuvC complex processes Holliday junction (HJ) DNA during genetic recombination and DNA repair, while the RuvA-RuvB complex plays an important role in the rescue of blocked DNA replication forks via replication fork reversal (RFR). RuvA specifically binds to HJ cruciform DNA, conferring on it an open structure. The RuvB hexamer acts as an ATP-dependent pump, pulling dsDNA into and through the RuvAB complex. HJ branch migration allows RuvC to scan DNA until it finds its consensus sequence, where it cleaves and resolves the cruciform DNA. This Chloroflexus aurantiacus (strain ATCC 29364 / DSM 637 / Y-400-fl) protein is Holliday junction branch migration complex subunit RuvA.